Consider the following 671-residue polypeptide: Probable potassium transport system protein Kup 2 (671 aa).

12 helical membrane-spanning segments follow: residues 18 to 38, 60 to 80, 103 to 123, 146 to 166, 173 to 193, 218 to 238, 252 to 272, 292 to 312, 343 to 363, 373 to 393, 402 to 422, and 424 to 444; these read GFLI…LYAM, VSLV…LIAL, WLII…ALTP, AVMV…RFGA, FGPI…INSF, AGFF…ALYS, WPFV…WLLA, MVIY…QALI, LYIP…VLYF, YSLA…YFLI, IAII…ASLV, and FING…VMFI.

This sequence belongs to the HAK/KUP transporter (TC 2.A.72) family.

The protein resides in the cell membrane. It carries out the reaction K(+)(in) + H(+)(in) = K(+)(out) + H(+)(out). In terms of biological role, transport of potassium into the cell. Likely operates as a K(+):H(+) symporter. The polypeptide is Probable potassium transport system protein Kup 2 (Lactococcus lactis subsp. lactis (strain IL1403) (Streptococcus lactis)).